A 256-amino-acid polypeptide reads, in one-letter code: uncharacterized protein (256 aa).

A coiled-coil region spans residues 187–223 (MEEEEISEVEDALNVLQRLCAQEEGDNKEAETNNNNY).

This is an uncharacterized protein from Ostreid herpesvirus 1 (isolate France) (OsHV-1).